Here is a 152-residue protein sequence, read N- to C-terminus: Ubiquitin-conjugating enzyme E2 N (152 aa).

Positions 3–149 constitute a UBC core domain; the sequence is GLPRRIIKET…ARAWTRLYAM (147 aa). At Lys82 the chain carries N6-acetyllysine. Cys87 serves as the catalytic Glycyl thioester intermediate. Lys92 is covalently cross-linked (Glycyl lysine isopeptide (Lys-Gly) (interchain with G-Cter in ISG15)). The residue at position 131 (Ser131) is a Phosphoserine.

The protein belongs to the ubiquitin-conjugating enzyme family. Heterodimer with UBE2V2. Interacts (UBE2V2-UBE2N heterodimer) with the E3 ligase STUB1 (via the U-box domain); the complex has a specific 'Lys-63'-linked polyubiquitination activity. Interacts with RNF8 and RNF168. Interacts with RNF11. Interacts with the E3 ligases, HLTF and SHPRH; the interactions promote the 'Lys-63'-linked polyubiquitination of PCNA upon genotoxic stress and lead to DNA repair. Interacts with ARIH2 (via RING-type 2). Interacts with OTUB1; leading to inhibit E2-conjugating activity. Interacts with GPS2; leading to inhibit E2-conjugating activity. Interacts with RIGI and RNF135; involved in RIGI ubiquitination and activation. Post-translationally, conjugation to ISG15 impairs formation of the thioester bond with ubiquitin but not interaction with UBE2V2.

It carries out the reaction S-ubiquitinyl-[E1 ubiquitin-activating enzyme]-L-cysteine + [E2 ubiquitin-conjugating enzyme]-L-cysteine = [E1 ubiquitin-activating enzyme]-L-cysteine + S-ubiquitinyl-[E2 ubiquitin-conjugating enzyme]-L-cysteine.. It participates in protein modification; protein ubiquitination. Its activity is regulated as follows. Activity is inhibited by binding to OTUB1, which prevents 'Lys-63'-linked polyubiquitination. Activity is inhibited by GPS2, leading to prevent 'Lys-63'-linked polyubiquitination. In terms of biological role, the UBE2V1-UBE2N and UBE2V2-UBE2N heterodimers catalyze the synthesis of non-canonical 'Lys-63'-linked polyubiquitin chains. This type of polyubiquitination does not lead to protein degradation by the proteasome. Mediates transcriptional activation of target genes. Plays a role in the control of progress through the cell cycle and differentiation. Plays a role in the error-free DNA repair pathway and contributes to the survival of cells after DNA damage. Acts together with the E3 ligases, HLTF and SHPRH, in the 'Lys-63'-linked poly-ubiquitination of PCNA upon genotoxic stress, which is required for DNA repair. Appears to act together with E3 ligase RNF5 in the 'Lys-63'-linked polyubiquitination of JKAMP thereby regulating JKAMP function by decreasing its association with components of the proteasome and ERAD. Promotes TRIM5 capsid-specific restriction activity and the UBE2V1-UBE2N heterodimer acts in concert with TRIM5 to generate 'Lys-63'-linked polyubiquitin chains which activate the MAP3K7/TAK1 complex which in turn results in the induction and expression of NF-kappa-B and MAPK-responsive inflammatory genes. Together with RNF135 and UB2V1, catalyzes the viral RNA-dependent 'Lys-63'-linked polyubiquitination of RIGI to activate the downstream signaling pathway that leads to interferon beta production. UBE2V1-UBE2N together with TRAF3IP2 E3 ubiquitin ligase mediate 'Lys-63'-linked polyubiquitination of TRAF6, a component of IL17A-mediated signaling pathway. The polypeptide is Ubiquitin-conjugating enzyme E2 N (Ube2n) (Rattus norvegicus (Rat)).